A 278-amino-acid chain; its full sequence is HTH-type transcriptional activator RhaS (278 aa).

Residues 174 to 272 enclose the HTH araC/xylS-type domain; the sequence is NQLMAWLEDH…NWSPRDIRQG (99 aa). 2 DNA-binding regions (H-T-H motif) span residues 191–212 and 239–262; these read EAVAEQFSLSLRTLHRQLKQHT and VTEIAYRCGFGDSNHFSTLFRREF.

In terms of assembly, binds DNA as a dimer.

It localises to the cytoplasm. In terms of biological role, activates expression of the rhaBAD and rhaT operons. The chain is HTH-type transcriptional activator RhaS from Salmonella arizonae (strain ATCC BAA-731 / CDC346-86 / RSK2980).